The following is a 457-amino-acid chain: Solute carrier family 38 member 6 (457 aa).

At Met1 the chain carries N-acetylmethionine. Phosphoserine occurs at positions 4 and 7. 5 helical membrane-spanning segments follow: residues 48–68 (FGLS…LGLA), 70–90 (VMAN…ALLA), 112–132 (LGLF…IIIQ), 171–191 (LLII…KIGF), and 192–212 (LGYT…VVVI). Cys219 and Cys239 are oxidised to a cystine. 6 consecutive transmembrane segments (helical) span residues 251–271 (VYAI…LPIY), 289–309 (AIAL…LTFY), 328–348 (VIVM…APLI), 372–392 (SLTT…VPDI), 395–415 (VFGV…PGLF), and 432–452 (ALFL…LIIF).

The protein belongs to the amino acid/polyamine transporter 2 family. In terms of tissue distribution, expressed exclusively in neurons and not in astrocytes and glia cells. Highly expressed in the synapse. Highly expressed in glutamatergic neurons. Primarily expressed in excitatory neurons, with some minor expression in inhibitory neurons.

The protein localises to the cell membrane. It localises to the synapse. It carries out the reaction L-glutamine(out) = L-glutamine(in). It catalyses the reaction L-glutamate(out) = L-glutamate(in). In terms of biological role, amino acid transporter with an apparent selectivity for L-glutamine and L-glutamate. May facilitate glutamine uptake in excitatory neurons. The transport mechanism remains to be elucidated. The chain is Solute carrier family 38 member 6 from Mus musculus (Mouse).